The following is a 316-amino-acid chain: Ornithine carbamoyltransferase (316 aa).

Residues 57-60 (STRT), Gln84, Arg108, and 135-138 (HPCQ) contribute to the carbamoyl phosphate site. L-ornithine contacts are provided by residues Asn166, Asp230, and 234 to 235 (SM). Residues 269-270 (CL) and Arg297 contribute to the carbamoyl phosphate site.

It belongs to the aspartate/ornithine carbamoyltransferase superfamily. OTCase family.

It localises to the cytoplasm. It carries out the reaction carbamoyl phosphate + L-ornithine = L-citrulline + phosphate + H(+). It functions in the pathway amino-acid biosynthesis; L-arginine biosynthesis; L-arginine from L-ornithine and carbamoyl phosphate: step 1/3. In terms of biological role, reversibly catalyzes the transfer of the carbamoyl group from carbamoyl phosphate (CP) to the N(epsilon) atom of ornithine (ORN) to produce L-citrulline. The polypeptide is Ornithine carbamoyltransferase (argF) (Bacillus cereus (strain ATCC 14579 / DSM 31 / CCUG 7414 / JCM 2152 / NBRC 15305 / NCIMB 9373 / NCTC 2599 / NRRL B-3711)).